The primary structure comprises 223 residues: Kinetochore protein Spc25 (223 aa).

A coiled-coil region spans residues 51–119 (RHQRKVGKLQ…NEIMERIQTL (69 aa)).

It belongs to the SPC25 family. In terms of assembly, component of the Ndc80 complex, which is composed of Ndc80, Nuf2 and Spc25.

The protein resides in the nucleus. It is found in the chromosome. It localises to the centromere. Its subcellular location is the kinetochore. Acts as a component of the essential kinetochore-associated Ndc80 complex, which is required for chromosome segregation and spindle checkpoint activity during meiosis and mitosis. Required for kinetochore integrity and the organization of stable microtubule binding sites in the outer plate of the kinetochore. Participates in SAC signaling that responds specifically to disruptions in spindle microtubule dynamics. The NDC80 complex synergistically enhances the affinity of the SKA1 complex for microtubules and may allow the NDC80 complex to track depolymerizing microtubules. The chain is Kinetochore protein Spc25 from Drosophila teissieri (Fruit fly).